A 656-amino-acid polypeptide reads, in one-letter code: tRNA(Met) cytidine acetyltransferase TmcA (656 aa).

ATP contacts are provided by residues Gln-145, Gly-167 to Met-176, and Arg-291. The N-acetyltransferase domain occupies Ser-368 to Lys-542. Acetyl-CoA-binding positions include Ile-474 to Val-476, Gln-481 to Gln-487, and Glu-510.

The protein belongs to the RNA cytidine acetyltransferase family. TmcA subfamily.

The protein resides in the cytoplasm. It catalyses the reaction cytidine(34) in elongator tRNA(Met) + acetyl-CoA + ATP + H2O = N(4)-acetylcytidine(34) in elongator tRNA(Met) + ADP + phosphate + CoA + H(+). Functionally, catalyzes the formation of N(4)-acetylcytidine (ac(4)C) at the wobble position of tRNA(Met), by using acetyl-CoA as an acetyl donor and ATP (or GTP). The chain is tRNA(Met) cytidine acetyltransferase TmcA from Haemophilus influenzae (strain ATCC 51907 / DSM 11121 / KW20 / Rd).